A 144-amino-acid polypeptide reads, in one-letter code: UPF0225 protein RSc0270 (144 aa).

This sequence belongs to the UPF0225 family.

This Ralstonia nicotianae (strain ATCC BAA-1114 / GMI1000) (Ralstonia solanacearum) protein is UPF0225 protein RSc0270.